A 318-amino-acid chain; its full sequence is CRISPR-associated endonuclease Cas1 1 (318 aa).

E157, H222, and E237 together coordinate Mn(2+).

It belongs to the CRISPR-associated endonuclease Cas1 family. Homodimer, forms a heterotetramer with a Cas2 homodimer. Mg(2+) serves as cofactor. Mn(2+) is required as a cofactor.

Its function is as follows. CRISPR (clustered regularly interspaced short palindromic repeat), is an adaptive immune system that provides protection against mobile genetic elements (viruses, transposable elements and conjugative plasmids). CRISPR clusters contain spacers, sequences complementary to antecedent mobile elements, and target invading nucleic acids. CRISPR clusters are transcribed and processed into CRISPR RNA (crRNA). Acts as a dsDNA endonuclease. Involved in the integration of spacer DNA into the CRISPR cassette. The protein is CRISPR-associated endonuclease Cas1 1 of Francisella tularensis subsp. novicida (strain U112).